The chain runs to 380 residues: Polygalacturonase 2 (380 aa).

Positions 1–20 are cleaved as a signal peptide; it reads MIAGSKLLMLGLFGALAVHA. Residues 21 to 38 constitute a propeptide that is removed on maturation; sequence LPEPAKAQVTAAPKLEER. An intrachain disulfide couples C42 to C60. 2 PbH1 repeats span residues 173-204 and 205-226; these read ATDLTLSGITVDNRDGDTDEGGHNTDAFDVGS and STGITITGATVYNQDDCLAVNS. D219 serves as the catalytic Proton donor. Cysteines 221 and 237 form a disulfide. The active site involves H241. PbH1 repeat units follow at residues 256-277, 285-307, and 319-364; these read VANVIIENSQIQDSTNGVRIKT, VKNVTYKDITLSGITKYGIVIEQ, and TDGV…SVSG. Residue N287 is glycosylated (N-linked (GlcNAc...) asparagine). 2 cysteine pairs are disulfide-bonded: C347–C352 and C371–C380.

The protein belongs to the glycosyl hydrolase 28 family.

It is found in the secreted. It carries out the reaction (1,4-alpha-D-galacturonosyl)n+m + H2O = (1,4-alpha-D-galacturonosyl)n + (1,4-alpha-D-galacturonosyl)m.. This is Polygalacturonase 2 (PG2) from Penicillium olsonii.